The chain runs to 533 residues: Na(+)/H(+) antiporter NhaB (533 aa).

11 consecutive transmembrane segments (helical) span residues 10-30 (IGNFLGNSPKWYKIAILSFLI), 67-87 (PGGLLAIEAVAIGMTSASQVL), 98-118 (LLLVFMVAGIYFMKQLLLFVF), 131-165 (VSLLFCLASAFLSAFLDALTVIAVIITVAVGFYSI), 209-229 (LLMHAGVGTALGGVCTMVGEP), 247-267 (IRMSPVTVPVLFAGILTCFIV), 310-330 (AFVGVWLIAGLALHLASVGLI), 355-375 (EEALPFTALLAVFFAVVAVII), 396-416 (LVIFYIANGLLSMVSDNVFVG), 454-474 (ATPNGQAAFLFLLTSALAPLI), and 481-501 (MVWMALPYTIVLSIVGVMAIQ).

It belongs to the NhaB Na(+)/H(+) (TC 2.A.34) antiporter family.

It localises to the cell inner membrane. It carries out the reaction 2 Na(+)(in) + 3 H(+)(out) = 2 Na(+)(out) + 3 H(+)(in). Functionally, na(+)/H(+) antiporter that extrudes sodium in exchange for external protons. The chain is Na(+)/H(+) antiporter NhaB from Shewanella sp. (strain ANA-3).